Consider the following 675-residue polypeptide: Acetyl-coenzyme A synthetase 1 (675 aa).

Residues 1–10 are compositionally biased toward polar residues; that stretch reads MPESTQQSHL. Residues 1–32 are disordered; the sequence is MPESTQQSHLSLDHEKMQQPPKGFTERSKTKP. CoA-binding positions include 212-215 and Thr-331; that span reads RGGK. Residues 407–409, 431–436, Asp-522, and Arg-537 contribute to the ATP site; these read GEP and DTYWQT. Ser-545 serves as a coordination point for CoA. Arg-548 contributes to the ATP binding site. Residue Arg-609 coordinates CoA.

Belongs to the ATP-dependent AMP-binding enzyme family.

The catalysed reaction is acetate + ATP + CoA = acetyl-CoA + AMP + diphosphate. The chain is Acetyl-coenzyme A synthetase 1 (ACS1) from Candida albicans (Yeast).